Reading from the N-terminus, the 488-residue chain is F-box protein At3g60790 (488 aa).

A disordered region spans residues 1–21 (MTTQSSSSSSSLPSSLSSTPP). In terms of domain architecture, F-box spans 49–95 (VDRISMLPDEMLQKILSTLSTKDAVITSTLSKRWVDQWKRIPHLCVD).

The sequence is that of F-box protein At3g60790 from Arabidopsis thaliana (Mouse-ear cress).